The following is an 89-amino-acid chain: Elongation factor 1-beta (89 aa).

Belongs to the EF-1-beta/EF-1-delta family.

Its function is as follows. Promotes the exchange of GDP for GTP in EF-1-alpha/GDP, thus allowing the regeneration of EF-1-alpha/GTP that could then be used to form the ternary complex EF-1-alpha/GTP/AAtRNA. The polypeptide is Elongation factor 1-beta (ef1b) (Methanocaldococcus jannaschii (strain ATCC 43067 / DSM 2661 / JAL-1 / JCM 10045 / NBRC 100440) (Methanococcus jannaschii)).